Here is a 405-residue protein sequence, read N- to C-terminus: Zinc finger protein ubi-d4 (405 aa).

Disordered stretches follow at residues 80–147 (RKKR…GEFP), 165–194 (DDLDDEDYEEDTPKRRGKGKAKGKGVGGAR), 210–230 (ACDNSYKQKHSLKPPDRVCGK), and 248–280 (AEEEGDDKDDSQPPTPVSQRSEEQKSKKGPDGL). Composition is skewed to basic and acidic residues over residues 100–110 (PDTDQTLKKEG) and 126–140 (DPLEKRSLPDPRMDD). Positions 165–174 (DDLDDEDYEE) are enriched in acidic residues. The segment at 209–246 (YACDNSYKQKHSLKPPDRVCGKRYKNRPGLSYHYAHSH) adopts a C2H2-type; atypical zinc-finger fold. The span at 267 to 277 (RSEEQKSKKGP) shows a compositional bias: basic and acidic residues. 2 consecutive PHD-type zinc fingers follow at residues 284-344 (NNYC…CKCC) and 341-391 (CKCC…CLDL).

It belongs to the requiem/DPF family.

The protein localises to the cytoplasm. It is found in the nucleus. Functionally, may be a transcription factor required for the apoptosis response following survival factor withdrawal from myeloid cells. Might also have a role in the development and maturation of lymphoid cells. This Gallus gallus (Chicken) protein is Zinc finger protein ubi-d4 (REQ).